The primary structure comprises 85 residues: Probable oxaloacetate decarboxylase gamma chain (85 aa).

A helical membrane pass occupies residues 11–33; the sequence is AATLMVTGMAVVFIFLTILVYLV.

It belongs to the OadG family. Heterotrimer of an alpha, a beta and a gamma subunit. The cofactor is Na(+).

The protein localises to the cell membrane. The enzyme catalyses oxaloacetate + 2 Na(+)(in) + H(+) = pyruvate + 2 Na(+)(out) + CO2. Catalyzes the decarboxylation of oxaloacetate coupled to Na(+) translocation. In Vibrio parahaemolyticus serotype O3:K6 (strain RIMD 2210633), this protein is Probable oxaloacetate decarboxylase gamma chain.